We begin with the raw amino-acid sequence, 258 residues long: UPF0246 protein VS_0505 (258 aa).

Belongs to the UPF0246 family.

The sequence is that of UPF0246 protein VS_0505 from Vibrio atlanticus (strain LGP32) (Vibrio splendidus (strain Mel32)).